Consider the following 213-residue polypeptide: Histone H1 (213 aa).

Residues 1 to 25 show a composition bias toward low complexity; the sequence is MAAATASAAATPAKKAAPKKPAAAP. Disordered regions lie at residues 1–30 and 81–213; these read MAAATASAAATPAKKAAPKKPAAAPEHPSY and GEFV…AKSS. An H15 domain is found at 26–97; sequence EHPSYKEMLT…GPSGTVKLAK (72 aa). Low complexity-rich tracts occupy residues 102 to 113, 123 to 137, 157 to 176, and 203 to 213; these read AAAPKKPAAKKA, KKAAAPKKAAAPKSA, KKAAAPKKVAAPVEKPAPVK, and PKKAATPAKSS.

Belongs to the histone H1/H5 family.

Its subcellular location is the nucleus. The protein localises to the chromosome. Could act as an H1-type linker histone. This is Histone H1 from Ascobolus immersus.